The chain runs to 281 residues: MATVTAALVKELRERTAAGMMECKKALVAAEGDIELAIENMRKSGAAKAAKKAGNVAAEGAIIIKEEAGVAALLEVNCQTDFVAKDAGFLAFANEVAEVALAERLDIVALQAKFEDARIALVTKIGENISIRRVELVEGVALASYRHGEKIGVVVAGEGEAETLKHIAMHVAASKPEYVNPSDVPADVVEKEKAVQVEIAMNEGKPQEIAEKMVIGRMKKFTGEVSLTGQAFIMEPKKTVADILKEKGASVTTFVRLEVGEGIEKAAEMSFADEVAAVQKG.

The interval Thr80–Val83 is involved in Mg(2+) ion dislocation from EF-Tu.

It belongs to the EF-Ts family.

It is found in the cytoplasm. Associates with the EF-Tu.GDP complex and induces the exchange of GDP to GTP. It remains bound to the aminoacyl-tRNA.EF-Tu.GTP complex up to the GTP hydrolysis stage on the ribosome. The sequence is that of Elongation factor Ts from Vibrio atlanticus (strain LGP32) (Vibrio splendidus (strain Mel32)).